We begin with the raw amino-acid sequence, 358 residues long: Methionine import ATP-binding protein MetN (358 aa).

The ABC transporter domain occupies 2–247; it reads ITTTGLTKVY…PGSELAHELF (246 aa). 38–45 serves as a coordination point for ATP; sequence GQSGAGKS.

Belongs to the ABC transporter superfamily. Methionine importer (TC 3.A.1.24) family. In terms of assembly, the complex is composed of two ATP-binding proteins (MetN), two transmembrane proteins (MetI) and a solute-binding protein (MetQ).

It is found in the cell membrane. The catalysed reaction is L-methionine(out) + ATP + H2O = L-methionine(in) + ADP + phosphate + H(+). It carries out the reaction D-methionine(out) + ATP + H2O = D-methionine(in) + ADP + phosphate + H(+). Its function is as follows. Part of the ABC transporter complex MetNIQ involved in methionine import. Responsible for energy coupling to the transport system. The polypeptide is Methionine import ATP-binding protein MetN (Streptomyces griseus).